The following is a 199-amino-acid chain: Large ribosomal subunit protein bL25 (199 aa).

This sequence belongs to the bacterial ribosomal protein bL25 family. CTC subfamily. As to quaternary structure, part of the 50S ribosomal subunit; part of the 5S rRNA/L5/L18/L25 subcomplex. Contacts the 5S rRNA. Binds to the 5S rRNA independently of L5 and L18.

This is one of the proteins that binds to the 5S RNA in the ribosome where it forms part of the central protuberance. In Chloroherpeton thalassium (strain ATCC 35110 / GB-78), this protein is Large ribosomal subunit protein bL25.